The primary structure comprises 825 residues: Ubiquitin carboxyl-terminal hydrolase 16 (825 aa).

The tract at residues 1-20 (MGKKRTKGRSAPDTVASESA) is disordered. The UBP-type zinc-finger motif lies at 22–141 (PVCRHLRKGL…QVVDYVRKQA (120 aa)). Residues C24, H26, C48, C51, C73, C76, C81, H89, H93, H102, C115, and C118 each coordinate Zn(2+). K139 is covalently cross-linked (Glycyl lysine isopeptide (Lys-Gly) (interchain with G-Cter in SUMO2)). Basic and acidic residues predominate over residues 164–180 (EKESKNEQEREKSENLA). Residues 164-184 (EKESKNEQEREKSENLAKETI) form a disordered region. S188 is modified (phosphoserine). Residues 195-824 (KGLSNLGNTC…QAYLLFYERI (630 aa)) form the USP domain. Catalysis depends on C204, which acts as the Nucleophile. Residues 393–407 (SGKKSINDKNVKMTM) show a composition bias toward basic and acidic residues. Residues 393–456 (SGKKSINDKN…KQAKNQRRQQ (64 aa)) are disordered. Residues 408-419 (EEEDKDSEEEKD) are compositionally biased toward acidic residues. S414 carries the post-translational modification Phosphoserine. Basic residues predominate over residues 436–456 (HLQKKAKKQAKKQAKNQRRQQ). A phosphoserine mark is found at S520 and S531. H759 (proton acceptor) is an active-site residue.

Belongs to the peptidase C19 family. USP16 subfamily. In terms of assembly, homotetramer. Associates with late pre-40S ribosomes. Interacts with CEP78; promoting deubiquitination of tektins. In terms of processing, phosphorylated at the onset of mitosis and dephosphorylated during the metaphase/anaphase transition. Phosphorylation by AURKB enhances the deubiquitinase activity.

The protein localises to the nucleus. It is found in the cytoplasm. It catalyses the reaction Thiol-dependent hydrolysis of ester, thioester, amide, peptide and isopeptide bonds formed by the C-terminal Gly of ubiquitin (a 76-residue protein attached to proteins as an intracellular targeting signal).. Specifically deubiquitinates 'Lys-120' of histone H2A (H2AK119Ub), a specific tag for epigenetic transcriptional repression, thereby acting as a coactivator. Deubiquitination of histone H2A is a prerequisite for subsequent phosphorylation at 'Ser-11' of histone H3 (H3S10ph), and is required for chromosome segregation when cells enter into mitosis. In resting B- and T-lymphocytes, phosphorylation by AURKB leads to enhance its activity, thereby maintaining transcription in resting lymphocytes. Regulates Hox gene expression via histone H2A deubiquitination. Prefers nucleosomal substrates. Does not deubiquitinate histone H2B. Also deubiquitinates non-histone proteins, such as ribosomal protein RPS27A: deubiquitination of monoubiquitinated RPS27A promotes maturation of the 40S ribosomal subunit. Also mediates deubiquitination of tektin proteins (TEKT1, TEKT2, TEK3, TEKT4 and TEKT5), promoting their stability. This Mus musculus (Mouse) protein is Ubiquitin carboxyl-terminal hydrolase 16 (Usp16).